The chain runs to 209 residues: Uracil phosphoribosyltransferase (209 aa).

5-phospho-alpha-D-ribose 1-diphosphate contacts are provided by residues R79, R104, and D131 to S139. Uracil contacts are provided by residues I194 and G199 to A201. D200 serves as a coordination point for 5-phospho-alpha-D-ribose 1-diphosphate.

Belongs to the UPRTase family. Mg(2+) serves as cofactor.

It carries out the reaction UMP + diphosphate = 5-phospho-alpha-D-ribose 1-diphosphate + uracil. It functions in the pathway pyrimidine metabolism; UMP biosynthesis via salvage pathway; UMP from uracil: step 1/1. With respect to regulation, allosterically activated by GTP. Functionally, catalyzes the conversion of uracil and 5-phospho-alpha-D-ribose 1-diphosphate (PRPP) to UMP and diphosphate. The protein is Uracil phosphoribosyltransferase of Staphylococcus epidermidis (strain ATCC 35984 / DSM 28319 / BCRC 17069 / CCUG 31568 / BM 3577 / RP62A).